The sequence spans 510 residues: Maturase K (510 aa).

Belongs to the intron maturase 2 family. MatK subfamily.

The protein localises to the plastid. Usually encoded in the trnK tRNA gene intron. Probably assists in splicing its own and other chloroplast group II introns. The sequence is that of Maturase K from Aneura mirabilis (Parasitic liverwort).